Consider the following 324-residue polypeptide: bZIP transcription factor 46 (324 aa).

The tract at residues 106 to 127 (LGGSDDEDPAAAAAAAAPAQRQ) is disordered. A compositionally biased stretch (low complexity) spans 115–124 (AAAAAAAAPA). Residues 242 to 287 (VERRQRRMIKNRESAARSRARKQAYIMELEAEVAKLKEQKAELQKK) enclose the bZIP domain. The tract at residues 244–263 (RRQRRMIKNRESAARSRARK) is basic motif. A leucine-zipper region spans residues 270–284 (LEAEVAKLKEQKAEL).

Interacts with MODD. Interacts with SAPK2, SAPK6 and SAPK9. Phosphorylated on serine and threonine residues by SAPK2, SAPK6 and SAPK9. Phosphorylation is required for full transactivation activity. In terms of tissue distribution, expressed in roots, shoots, leaves, flag leaves, stems, flowers and panicles. Widely expressed.

The protein resides in the nucleus. Transcription factor involved in abscisic acid (ABA) signaling pathway. Transcription factor activity is fully activated by ABA. Acts as a positive regulator of the expression of abiotic stress-responsive genes through an ABA-dependent signaling pathway. Acts as a positive regulator of ABA signaling and drought stress tolerance. Plays an important role in ABA and auxin responses. Involved in ABA signaling and stress responses by directly binding to the ABA-responsive element (ABRE)-containing genes, especially WRKY family genes. Modulates response to auxin. Suppresses auxin signaling by targeting ABRE-containing genes related to auxin metabolism or signaling. The protein is bZIP transcription factor 46 of Oryza sativa subsp. japonica (Rice).